The chain runs to 158 residues: Transcription elongation factor GreA (158 aa).

A coiled-coil region spans residues 47–74 (AEYHAAKEEQSHNEGRIAELEDKLARAD).

Belongs to the GreA/GreB family.

Its function is as follows. Necessary for efficient RNA polymerase transcription elongation past template-encoded arresting sites. The arresting sites in DNA have the property of trapping a certain fraction of elongating RNA polymerases that pass through, resulting in locked ternary complexes. Cleavage of the nascent transcript by cleavage factors such as GreA or GreB allows the resumption of elongation from the new 3'terminus. GreA releases sequences of 2 to 3 nucleotides. The protein is Transcription elongation factor GreA of Nitrobacter winogradskyi (strain ATCC 25391 / DSM 10237 / CIP 104748 / NCIMB 11846 / Nb-255).